A 74-amino-acid chain; its full sequence is Conotoxin Im6.10 (74 aa).

Residues 1–19 form the signal peptide; it reads MKTGMIICLLLIAFMDADG. Residues 20-47 constitute a propeptide that is removed on maturation; it reads SPGDTLYSQKTADTDSGMKRFQKTFQKR. Intrachain disulfides connect cysteine 49–cysteine 58, cysteine 52–cysteine 63, and cysteine 57–cysteine 73.

Expressed by the venom duct.

Its subcellular location is the secreted. Probable neurotoxin. The sequence is that of Conotoxin Im6.10 from Conus imperialis (Imperial cone).